A 353-amino-acid polypeptide reads, in one-letter code: Rhodopsin (353 aa).

Residues 1–36 (MNGTEGENFYIPFSNKTGLARSPFEYPQYYLAEPWK) are Extracellular-facing. N-linked (GlcNAc...) asparagine glycosylation is found at asparagine 2 and asparagine 15. A helical membrane pass occupies residues 37-61 (YSVLAAYMFFLILVGFPVNFLTLFV). Topologically, residues 62–73 (TVQHKKLRTPLN) are cytoplasmic. A helical transmembrane segment spans residues 74 to 96 (YILLNLAVANLFMVLFGFTLTMY). Topologically, residues 97–110 (SSMNGYFVFGPTMC) are extracellular. A disulfide bridge connects residues cysteine 110 and cysteine 187. The helical transmembrane segment at 111–133 (NFEGFFATLGGEMSLWSLVVLAI) threads the bilayer. The short motif at 134-136 (ERY) is the 'Ionic lock' involved in activated form stabilization element. At 134–152 (ERYIVICKPMGNFRFGSTH) the chain is on the cytoplasmic side. Residues 153–173 (AYMGVAFTWFMALSCAAPPLV) traverse the membrane as a helical segment. Residues 174–202 (GWSRYLPEGMQCSCGPDYYTLNPNFNNES) are Extracellular-facing. Residues 203–224 (FVIYMFLVHFIIPFIVIFFCYG) traverse the membrane as a helical segment. Residues 225-252 (RLLCTVKEAAAAQQESASTQKAEKEVTR) are Cytoplasmic-facing. A helical membrane pass occupies residues 253 to 274 (MVVLMVIGFLVCWVPYASVAFY). Topologically, residues 275 to 286 (IFTHQGSDFGAT) are extracellular. A helical transmembrane segment spans residues 287 to 308 (FMTVPAFFAKTSALYNPIIYIL). Lysine 296 is modified (N6-(retinylidene)lysine). Over 309–353 (MNKQFRNCMITTLCCGKNPLGDEDSGASTSKTEVSSVSTSQVSPA) the chain is Cytoplasmic. The segment at 330 to 353 (DEDSGASTSKTEVSSVSTSQVSPA) is disordered. Positions 336–353 (STSKTEVSSVSTSQVSPA) are enriched in low complexity.

It belongs to the G-protein coupled receptor 1 family. Opsin subfamily. Phosphorylated on some or all of the serine and threonine residues present in the C-terminal region. In terms of processing, contains one covalently linked retinal chromophore.

The protein localises to the membrane. Its subcellular location is the cell projection. It is found in the cilium. The protein resides in the photoreceptor outer segment. Functionally, photoreceptor required for image-forming vision at low light intensity. While most salt water fish species use retinal as chromophore, most freshwater fish use 3-dehydroretinal, or a mixture of retinal and 3-dehydroretinal. Light-induced isomerization of 11-cis to all-trans retinal triggers a conformational change that activates signaling via G-proteins. Subsequent receptor phosphorylation mediates displacement of the bound G-protein alpha subunit by arrestin and terminates signaling. The chain is Rhodopsin (RHO) from Petromyzon marinus (Sea lamprey).